The sequence spans 231 residues: Orotidine 5'-phosphate decarboxylase (231 aa).

Residues D11, K33, 60–69 (DLKFHDIPNT), T120, R181, Q190, G210, and R211 each bind substrate. Catalysis depends on K62, which acts as the Proton donor.

Belongs to the OMP decarboxylase family. Type 1 subfamily. In terms of assembly, homodimer.

The enzyme catalyses orotidine 5'-phosphate + H(+) = UMP + CO2. It functions in the pathway pyrimidine metabolism; UMP biosynthesis via de novo pathway; UMP from orotate: step 2/2. Catalyzes the decarboxylation of orotidine 5'-monophosphate (OMP) to uridine 5'-monophosphate (UMP). The sequence is that of Orotidine 5'-phosphate decarboxylase from Vibrio atlanticus (strain LGP32) (Vibrio splendidus (strain Mel32)).